Reading from the N-terminus, the 221-residue chain is CASP-like protein 4B1 (221 aa).

Positions 1–78 are disordered; the sequence is MAMQLHAASP…HDHHGGGGGG (78 aa). Residues 1–87 are Cytoplasmic-facing; the sequence is MAMQLHAASP…GDEATQLLNG (87 aa). The span at 19-33 shows a compositional bias: pro residues; it reads SPPPPPPLSPHPEPA. The span at 50-62 shows a compositional bias: low complexity; that stretch reads APVATATTPLTPG. The helical transmembrane segment at 88 to 108 threads the bilayer; that stretch reads IVLVLRAGAALLSFVAMALVA. Residues 109–125 lie on the Extracellular side of the membrane; sequence SCRHGDWMDFLRYQEYR. The helical transmembrane segment at 126-146 threads the bilayer; that stretch reads YLLGVSVVAFVYSAAQALKNF. Over 147–160 the chain is Cytoplasmic; that stretch reads RRRRRGAADASFLD. A helical transmembrane segment spans residues 161–181; the sequence is FAGDQAVAYLLVTASAAALPI. The Extracellular portion of the chain corresponds to 182–196; that stretch reads TIRMRSAVVNVFTDA. A helical transmembrane segment spans residues 197-217; it reads IAASIALGFLAFAALALSAML. The Cytoplasmic portion of the chain corresponds to 218 to 221; sequence SRHA.

This sequence belongs to the Casparian strip membrane proteins (CASP) family. In terms of assembly, homodimer and heterodimers.

The protein resides in the cell membrane. In Hordeum vulgare subsp. vulgare (Domesticated barley), this protein is CASP-like protein 4B1.